We begin with the raw amino-acid sequence, 463 residues long: Kynureninase 2 (463 aa).

Residues L134, T135, 162–165 (FPSD), D247, H250, and Y272 each bind pyridoxal 5'-phosphate. K273 is modified (N6-(pyridoxal phosphate)lysine). Pyridoxal 5'-phosphate is bound by residues W312 and N340.

This sequence belongs to the kynureninase family. Homodimer. The cofactor is pyridoxal 5'-phosphate.

It is found in the cytoplasm. It catalyses the reaction L-kynurenine + H2O = anthranilate + L-alanine + H(+). The enzyme catalyses 3-hydroxy-L-kynurenine + H2O = 3-hydroxyanthranilate + L-alanine + H(+). It functions in the pathway amino-acid degradation; L-kynurenine degradation; L-alanine and anthranilate from L-kynurenine: step 1/1. It participates in cofactor biosynthesis; NAD(+) biosynthesis; quinolinate from L-kynurenine: step 2/3. In terms of biological role, catalyzes the cleavage of L-kynurenine (L-Kyn) and L-3-hydroxykynurenine (L-3OHKyn) into anthranilic acid (AA) and 3-hydroxyanthranilic acid (3-OHAA), respectively. This is Kynureninase 2 (bna5-2) from Aspergillus terreus (strain NIH 2624 / FGSC A1156).